Consider the following 345-residue polypeptide: Phosphoribosylformylglycinamidine cyclo-ligase (345 aa).

The protein belongs to the AIR synthase family.

It is found in the cytoplasm. It carries out the reaction 2-formamido-N(1)-(5-O-phospho-beta-D-ribosyl)acetamidine + ATP = 5-amino-1-(5-phospho-beta-D-ribosyl)imidazole + ADP + phosphate + H(+). It functions in the pathway purine metabolism; IMP biosynthesis via de novo pathway; 5-amino-1-(5-phospho-D-ribosyl)imidazole from N(2)-formyl-N(1)-(5-phospho-D-ribosyl)glycinamide: step 2/2. In Actinobacillus succinogenes (strain ATCC 55618 / DSM 22257 / CCUG 43843 / 130Z), this protein is Phosphoribosylformylglycinamidine cyclo-ligase.